Here is a 213-residue protein sequence, read N- to C-terminus: Superoxide dismutase [Fe] (213 aa).

Positions 28, 82, 164, and 168 each coordinate Fe cation.

Belongs to the iron/manganese superoxide dismutase family. In terms of assembly, homotetramer. The cofactor is Fe cation.

It carries out the reaction 2 superoxide + 2 H(+) = H2O2 + O2. In terms of biological role, destroys superoxide anion radicals which are normally produced within the cells and which are toxic to biological systems. The polypeptide is Superoxide dismutase [Fe] (sodB) (Aquifex pyrophilus).